The chain runs to 1023 residues: Rho GTPase-activating protein 11A (1023 aa).

The region spanning 49 to 239 (VPFNALPHSA…TLIDYASDIG (191 aa)) is the Rho-GAP domain. A Phosphoserine modification is found at S285. T306 is subject to Phosphothreonine. 2 positions are modified to phosphoserine: S316 and S318. T323 is modified (phosphothreonine). Residues S339, S340, and S484 each carry the phosphoserine modification. A Phosphothreonine modification is found at T508. Residues 567–589 (TPSNLNNKHNSNITSSPLSGDEN) are disordered. A phosphoserine mark is found at S582, S585, S638, and S675. The interval 714–734 (KQEFSSDEEIKKQQSPKDKLN) is disordered. Positions 721–734 (EEIKKQQSPKDKLN) are enriched in basic and acidic residues. S847 carries the phosphoserine modification. Position 866 is a phosphothreonine (T866). S868 carries the phosphoserine modification. Positions 999 to 1023 (AWYKGSPKHPIGKTQLLPTSKPVDL) are disordered.

Its subcellular location is the nucleus. Its function is as follows. GTPase activator for the Rho-type GTPases by converting them to an inactive GDP-bound state. The polypeptide is Rho GTPase-activating protein 11A (Homo sapiens (Human)).